The chain runs to 271 residues: Proteasome inhibitor PI31 subunit (271 aa).

Ala-2 is modified (N-acetylalanine). Positions Ala-2–Asn-150 are important for homodimerization and interaction with FBXO7. Ser-153 bears the Phosphoserine mark. Residue Arg-205 is modified to Omega-N-methylarginine. Arg-219 bears the Asymmetric dimethylarginine mark. The tract at residues Ile-222–Leu-271 is disordered. At Arg-231 the chain carries Omega-N-methylarginine. Positions Thr-251–Gly-265 are enriched in pro residues. Position 252 is a phosphoserine (Ser-252).

The protein belongs to the proteasome inhibitor PI31 family. Monomer and homodimer. Interacts with FBXO7.

It localises to the cytoplasm. The protein localises to the endoplasmic reticulum. Its function is as follows. Plays an important role in control of proteasome function. Inhibits the hydrolysis of protein and peptide substrates by the 20S proteasome. Also inhibits the activation of the proteasome by the proteasome regulatory proteins PA700 and PA28. The polypeptide is Proteasome inhibitor PI31 subunit (PSMF1) (Pongo abelii (Sumatran orangutan)).